Reading from the N-terminus, the 417-residue chain is Probable histone-binding protein lin-53 (417 aa).

WD repeat units follow at residues 118-158 (NHEG…AVPR), 170-210 (GHTK…NVAG), 220-260 (GHES…PGHC), 263-303 (AHSA…MKLH), 307-347 (SHRD…EDQS), and 364-404 (GHTA…YNEV).

Belongs to the WD repeat RBAP46/RBAP48/MSI1 family. In terms of assembly, binds directly to helix 1 of the histone fold of histone H4, a region that is not accessible when H4 is in chromatin. Probable component of a NuRD-like complex, composed of at least lin-53 and hda-1. Interacts with lin-35. Interacts with hda-1; the interaction is direct. Component of the DRM complex, at least composed of lin-9, lin-35, lin-37, lin-52, lin-53, lin-54- dpl-1 and efl-1. Interacts with hcp-3.

The protein localises to the nucleus. The protein resides in the chromosome. Its subcellular location is the centromere. Its function is as follows. Core histone-binding subunit that may target chromatin assembly factors, chromatin remodeling factors and histone deacetylases to their histone substrates in a manner that is regulated by nucleosomal DNA. Required for hcp-3 and his-1 stabilization, localization of hcp-3 to centromeres and for proper chromosome segregation. Synthetic multivulva class B (synMuvB) protein. SynMuvB proteins are required to repress the induction of vulval development by Ras signaling and probably act by forming the multiprotein DRM complex that represses transcription. The protein is Probable histone-binding protein lin-53 of Caenorhabditis elegans.